We begin with the raw amino-acid sequence, 108 residues long: UPF0145 protein LCA_1282 (108 aa).

Belongs to the UPF0145 family.

The polypeptide is UPF0145 protein LCA_1282 (Latilactobacillus sakei subsp. sakei (strain 23K) (Lactobacillus sakei subsp. sakei)).